A 424-amino-acid polypeptide reads, in one-letter code: UDP-N-acetylglucosamine 1-carboxyvinyltransferase (424 aa).

22 to 23 (KN) is a phosphoenolpyruvate binding site. R96 lines the UDP-N-acetyl-alpha-D-glucosamine pocket. C120 (proton donor) is an active-site residue. C120 bears the 2-(S-cysteinyl)pyruvic acid O-phosphothioketal mark. UDP-N-acetyl-alpha-D-glucosamine is bound by residues 125-129 (RPVDQ), D312, and I334.

The protein belongs to the EPSP synthase family. MurA subfamily.

It is found in the cytoplasm. The enzyme catalyses phosphoenolpyruvate + UDP-N-acetyl-alpha-D-glucosamine = UDP-N-acetyl-3-O-(1-carboxyvinyl)-alpha-D-glucosamine + phosphate. Its pathway is cell wall biogenesis; peptidoglycan biosynthesis. In terms of biological role, cell wall formation. Adds enolpyruvyl to UDP-N-acetylglucosamine. The chain is UDP-N-acetylglucosamine 1-carboxyvinyltransferase from Polynucleobacter asymbioticus (strain DSM 18221 / CIP 109841 / QLW-P1DMWA-1) (Polynucleobacter necessarius subsp. asymbioticus).